We begin with the raw amino-acid sequence, 134 residues long: Probable glycine cleavage system H protein (134 aa).

The region spanning 29–110 (TVLVGITDYA…PYENWIAKLK (82 aa)) is the Lipoyl-binding domain. An N6-lipoyllysine modification is found at Lys-70.

The protein belongs to the GcvH family. As to quaternary structure, the glycine cleavage system is composed of four proteins: P, T, L and H. Requires (R)-lipoate as cofactor.

Its function is as follows. The glycine cleavage system catalyzes the degradation of glycine. The H protein shuttles the methylamine group of glycine from the P protein to the T protein. In Thermococcus gammatolerans (strain DSM 15229 / JCM 11827 / EJ3), this protein is Probable glycine cleavage system H protein.